The primary structure comprises 254 residues: Pimeloyl-[acyl-carrier protein] methyl ester esterase (254 aa).

The AB hydrolase-1 domain occupies 16-242 (LVLIHGWGMN…ASHAPFISHP (227 aa)). Residues W22, 82-83 (SL), and 143-147 (FLALQ) contribute to the substrate site. Catalysis depends on S82, which acts as the Nucleophile. Active-site residues include D207 and H235. H235 provides a ligand contact to substrate.

Belongs to the AB hydrolase superfamily. Carboxylesterase BioH family. As to quaternary structure, monomer.

It is found in the cytoplasm. It carries out the reaction 6-carboxyhexanoyl-[ACP] methyl ester + H2O = 6-carboxyhexanoyl-[ACP] + methanol + H(+). Its pathway is cofactor biosynthesis; biotin biosynthesis. Functionally, the physiological role of BioH is to remove the methyl group introduced by BioC when the pimeloyl moiety is complete. It allows to synthesize pimeloyl-ACP via the fatty acid synthetic pathway through the hydrolysis of the ester bonds of pimeloyl-ACP esters. This is Pimeloyl-[acyl-carrier protein] methyl ester esterase from Photobacterium profundum (strain SS9).